The sequence spans 72 residues: MSKDDVIEMQGTVLESLPNAMFQVELESGHKILAHISGKLRMNFIRILPGDKVTVELSPYDLTRGRITWRAK.

The S1-like domain occupies 1-72 (MSKDDVIEMQ…TRGRITWRAK (72 aa)).

The protein belongs to the IF-1 family. Component of the 30S ribosomal translation pre-initiation complex which assembles on the 30S ribosome in the order IF-2 and IF-3, IF-1 and N-formylmethionyl-tRNA(fMet); mRNA recruitment can occur at any time during PIC assembly.

The protein localises to the cytoplasm. One of the essential components for the initiation of protein synthesis. Stabilizes the binding of IF-2 and IF-3 on the 30S subunit to which N-formylmethionyl-tRNA(fMet) subsequently binds. Helps modulate mRNA selection, yielding the 30S pre-initiation complex (PIC). Upon addition of the 50S ribosomal subunit IF-1, IF-2 and IF-3 are released leaving the mature 70S translation initiation complex. This chain is Translation initiation factor IF-1, found in Clostridium beijerinckii (strain ATCC 51743 / NCIMB 8052) (Clostridium acetobutylicum).